We begin with the raw amino-acid sequence, 461 residues long: Cysteine--tRNA ligase (461 aa).

C30 provides a ligand contact to Zn(2+). A 'HIGH' region motif is present at residues 32-42; it reads VTVYDLCHIGH. Residues C211, H236, and E240 each coordinate Zn(2+). A 'KMSKS' region motif is present at residues 268–272; the sequence is KMSKS. K271 contributes to the ATP binding site.

Belongs to the class-I aminoacyl-tRNA synthetase family. In terms of assembly, monomer. It depends on Zn(2+) as a cofactor.

It is found in the cytoplasm. It carries out the reaction tRNA(Cys) + L-cysteine + ATP = L-cysteinyl-tRNA(Cys) + AMP + diphosphate. The sequence is that of Cysteine--tRNA ligase from Shewanella sp. (strain MR-4).